A 431-amino-acid chain; its full sequence is Adenylosuccinate synthetase (431 aa).

GTP-binding positions include 13 to 19 (GDEGKGK) and 41 to 43 (GHT). The active-site Proton acceptor is the Asp14. Residues Asp14 and Gly41 each contribute to the Mg(2+) site. IMP-binding positions include 14–17 (DEGK), 39–42 (NAGH), Thr130, Arg144, Gln225, Thr240, and Arg304. His42 acts as the Proton donor in catalysis. Residue 300 to 306 (ATTGRER) participates in substrate binding. Residues Arg306, 332 to 334 (KLD), and 415 to 417 (STG) contribute to the GTP site.

The protein belongs to the adenylosuccinate synthetase family. Homodimer. Mg(2+) serves as cofactor.

It localises to the cytoplasm. It carries out the reaction IMP + L-aspartate + GTP = N(6)-(1,2-dicarboxyethyl)-AMP + GDP + phosphate + 2 H(+). The protein operates within purine metabolism; AMP biosynthesis via de novo pathway; AMP from IMP: step 1/2. Plays an important role in the de novo pathway of purine nucleotide biosynthesis. Catalyzes the first committed step in the biosynthesis of AMP from IMP. This Colwellia psychrerythraea (strain 34H / ATCC BAA-681) (Vibrio psychroerythus) protein is Adenylosuccinate synthetase.